The following is a 420-amino-acid chain: Transcriptional adapter 2-beta (420 aa).

The segment at 4 to 59 adopts a ZZ-type zinc-finger fold; the sequence is LSKKYCVYCLADVTSLRLRCTECQDIELCTDCFSAGAEIGNHRRWHGYQLVDGGRF. Zn(2+)-binding residues include cysteine 9, cysteine 12, cysteine 23, cysteine 26, cysteine 32, cysteine 35, histidine 45, and histidine 49. Residues 65 to 118 enclose the SANT domain; the sequence is EAEGGWTSREEQLLLDAIEQFGFGNWEDMAAHVGASRTPTEVMEHYVTMYIHGN. The segment at 303–333 is disordered; the sequence is EESAEYEAARHKREKRKENKNIANSKRGRED.

It localises to the nucleus. In terms of biological role, transcriptional coactivator. In Xenopus laevis (African clawed frog), this protein is Transcriptional adapter 2-beta (tada2b).